The chain runs to 131 residues: Large ribosomal subunit protein bL20 (131 aa).

Belongs to the bacterial ribosomal protein bL20 family.

Functionally, binds directly to 23S ribosomal RNA and is necessary for the in vitro assembly process of the 50S ribosomal subunit. It is not involved in the protein synthesizing functions of that subunit. The sequence is that of Large ribosomal subunit protein bL20 from Mycolicibacterium paratuberculosis (strain ATCC BAA-968 / K-10) (Mycobacterium paratuberculosis).